The sequence spans 505 residues: MSEHFILQPGQLSLLSIKQILDEELSCVLAENAFELIRASHQTVKKVIDEKKTVYGINTGFGSLANQTISSDCLKELQRNIVLSHACGTGKLLPDDVVALILLLKINNLSQGYSGVRLELINALIALFNHKVYPCIPSKGSVGASGDLVPLAHLSLPLLGEGEVRHQGQVISAEEGLKLAGLKPLELEAKEGLALLNGLQVSTALALSALFISETLFETAIISGSLSVDAASGSDVPFDDRIHQIRGHQAQISAARMYRNLLAGSQIRESHRYCNRVQDPYSLRCQPQIMGAVLHQMEFVGQTLQVEANAISDNPLVFAEQGDILSGGNFHGEIIAMAADNLALALSEIGGSAERRIALLIDKNFSGLPAFLVRESGLNSGFMIAHVTAASCASDNKALAHPHSVDSLPTSANQEDHVSMATSAARRLHEMIDNTSTILAIELLAACQGLEFHKPLKTSPQLDKIYQSVRSVVKEYDKDRYFAPDIEKIKKKILDKEFSLLTLTN.

A cross-link (5-imidazolinone (Ala-Gly)) is located at residues 144 to 146 (ASG). The residue at position 145 (Ser145) is a 2,3-didehydroalanine (Ser).

This sequence belongs to the PAL/histidase family. Post-translationally, contains an active site 4-methylidene-imidazol-5-one (MIO), which is formed autocatalytically by cyclization and dehydration of residues Ala-Ser-Gly.

The protein resides in the cytoplasm. The catalysed reaction is L-histidine = trans-urocanate + NH4(+). It participates in amino-acid degradation; L-histidine degradation into L-glutamate; N-formimidoyl-L-glutamate from L-histidine: step 1/3. The chain is Histidine ammonia-lyase from Legionella pneumophila (strain Corby).